Reading from the N-terminus, the 153-residue chain is Glycosylation-dependent cell adhesion molecule 1 (153 aa).

A signal peptide spans 1-18; the sequence is MKFLCVLLLASLAATSLA. An O-linked (GalNAc...) threonine; partial glycan is attached at threonine 34. Serine 47, serine 52, serine 56, serine 58, and serine 64 each carry phosphoserine. Serine 78 is a glycosylation site (O-linked (HexNAc...) serine). Residue asparagine 95 is glycosylated (N-linked (GlcNAc...) asparagine). The tract at residues 95–115 is disordered; the sequence is NATLGSEETTEHTPSDASTTE. A glycan (O-linked (GalNAc...) threonine) is linked at threonine 104.

This sequence belongs to the PP3/GlyCAM-1 family. In terms of tissue distribution, highly and specifically expressed in the lactating mammary gland.

It is found in the membrane. This is Glycosylation-dependent cell adhesion molecule 1 (GLYCAM1) from Bos taurus (Bovine).